A 420-amino-acid chain; its full sequence is MNLLVVGSGGREHAISKKLLASNNVEKVFCAPGNDGMRLDDIQLVAISETDKAGLIDFAKKAEIAFVIVGPEVPLLEGVVDALEEAGIKAFGPKANAALIEGSKDFAKQFMEKYAIPTAASRTFTDYAEAKAYLNERGVPIVIKADGLAAGKGVTVALEMEEAVLALKDMMLEEKFGDASLKVVIEDFLAGEEFSLMAFVNGEEVYPMSIAQDHKRAYEGDKGPNTGGMGAYSPVPHISEAVIEEAVQKILLPTAKGMVKEGRYFRGILYAGLILTADGPKVIEFNARFGDPETQVVLPRLESDFAALIDALLHNEKPDVRFKKTGLTLGVVLASAGYPEHYEKGNKLTGLNDIAEDVAIYHAGTKQDENGDFISDGGRVLLLAKEAETMSDARTLLYPEMQKLDNPNFFYRIDIGTKAE.

The ATP-grasp domain occupies 108 to 314 (KQFMEKYAIP…FAALIDALLH (207 aa)). 134–195 (LNERGVPIVI…EDFLAGEEFS (62 aa)) provides a ligand contact to ATP. Mg(2+)-binding residues include glutamate 284 and asparagine 286.

The protein belongs to the GARS family. Mg(2+) serves as cofactor. Requires Mn(2+) as cofactor.

It carries out the reaction 5-phospho-beta-D-ribosylamine + glycine + ATP = N(1)-(5-phospho-beta-D-ribosyl)glycinamide + ADP + phosphate + H(+). Its pathway is purine metabolism; IMP biosynthesis via de novo pathway; N(1)-(5-phospho-D-ribosyl)glycinamide from 5-phospho-alpha-D-ribose 1-diphosphate: step 2/2. The chain is Phosphoribosylamine--glycine ligase from Listeria monocytogenes serovar 1/2a (strain ATCC BAA-679 / EGD-e).